A 105-amino-acid polypeptide reads, in one-letter code: Guanyl-specific ribonuclease U1 (105 aa).

Gln1 bears the Pyrrolidone carboxylic acid mark. Cystine bridges form between Cys8/Cys103 and Cys51/Cys87. His37 is a catalytic residue. Residue Glu57 is the Proton acceptor of the active site. His92 (proton donor) is an active-site residue.

It belongs to the ribonuclease N1/T1 family.

It catalyses the reaction [RNA] containing guanosine + H2O = an [RNA fragment]-3'-guanosine-3'-phosphate + a 5'-hydroxy-ribonucleotide-3'-[RNA fragment].. This Ustilago sphaerogena (Smut fungus) protein is Guanyl-specific ribonuclease U1.